A 200-amino-acid polypeptide reads, in one-letter code: Potassium-transporting ATPase KdpC subunit (200 aa).

The chain crosses the membrane as a helical span at residues 13–33 (ITLIFWLITAIIYPLAILVVG).

The protein belongs to the KdpC family. The system is composed of three essential subunits: KdpA, KdpB and KdpC.

Its subcellular location is the cell membrane. In terms of biological role, part of the high-affinity ATP-driven potassium transport (or Kdp) system, which catalyzes the hydrolysis of ATP coupled with the electrogenic transport of potassium into the cytoplasm. This subunit acts as a catalytic chaperone that increases the ATP-binding affinity of the ATP-hydrolyzing subunit KdpB by the formation of a transient KdpB/KdpC/ATP ternary complex. In Anabaena sp. (strain L31), this protein is Potassium-transporting ATPase KdpC subunit.